The chain runs to 388 residues: Putative F-box protein At3g17490 (388 aa).

The region spanning 1–46 (MMMPHLSEDLVEEILSRVPAISLKRLRYTCKQWNALFNDQRFSKKH) is the F-box domain.

The sequence is that of Putative F-box protein At3g17490 from Arabidopsis thaliana (Mouse-ear cress).